A 246-amino-acid chain; its full sequence is IPSRPVGGPCYLGKLTMLAPNHTDILKILANSSRTGIRRKRSVSHLDDTCSDEVQLWGPTARIFASILAPGVAAAQALKEIERLACWSVKQANLTTSLLGDLLDDVTSIRHAVLQNRAAIDFLLLAHGHGCEDVAGMCCFNLSDHSESIQKKFQLMKEHVNKIGVDSDPIGSWLRGLFGGIGEWAVHLLKGLLLGLVVILLLVVCLPCLLQIVCGNIRKMINNSISYHTEYKKLQKAYGQPESRIV.

Topologically, residues 1 to 192 (IPSRPVGGPC…EWAVHLLKGL (192 aa)) are extracellular. The N-linked (GlcNAc...) asparagine; by host glycan is linked to N31. A disulfide bond links C50 and C86. The interval 58–78 (GPTARIFASILAPGVAAAQAL) is fusion peptide. Positions 75-125 (AQALKEIERLACWSVKQANLTTSLLGDLLDDVTSIRHAVLQNRAAIDFLLL) form a coiled coil. N93 carries an N-linked (GlcNAc...) asparagine; by host glycan. Residues 114–130 (LQNRAAIDFLLLAHGHG) form an immunosuppression region. C131 and C138 are oxidised to a cystine. N-linked (GlcNAc...) asparagine; by host glycosylation is present at N141. Residues 143-173 (SDHSESIQKKFQLMKEHVNKIGVDSDPIGSW) are a coiled coil. The chain crosses the membrane as a helical span at residues 193–213 (LLGLVVILLLVVCLPCLLQIV). 2 S-palmitoyl cysteine; by host lipidation sites follow: C205 and C208. Over 214 to 246 (CGNIRKMINNSISYHTEYKKLQKAYGQPESRIV) the chain is Cytoplasmic.

It belongs to the Alpharetroviruses envelope glycoprotein family. In terms of assembly, heterodimer with the transmembrane protein. The mature envelope protein (Env) consists of a trimer of SU-TM heterodimers attached by a labile interchain disulfide bond. Heterodimer with the surface protein. The mature envelope protein (Env) consists of a trimer of SU-TM heterodimers attached by a labile interchain disulfide bond. In terms of processing, specific enzymatic cleavages in vivo yield mature proteins. Envelope glycoproteins are synthesized as an inactive precursor that is N-glycosylated and processed likely by host cell furin or by a furin-like protease in the Golgi to yield the mature SU and TM proteins. The cleavage site between SU and TM requires the minimal sequence [KR]-X-[KR]-R. The transmembrane protein is palmitoylated. Palmitoylation is necessary for glycoprotein function and infectivity.

The protein localises to the virion membrane. It localises to the host cell membrane. Its function is as follows. The surface protein (SU) attaches the virus to the host cell by binding to its receptor. This interaction triggers the refolding of the transmembrane protein (TM) thereby unmasking its fusion peptide and the formation of a reactive thiolate to activate its fusogenic potential. Fusion occurs at the host cell plasma membrane. The transmembrane protein (TM) acts as a class I viral fusion protein. Under the current model, the protein has at least 3 conformational states: pre-fusion native state, pre-hairpin intermediate state, and post-fusion hairpin state. During viral and target cell membrane fusion, the coiled coil regions (heptad repeats) assume a trimer-of-hairpins structure, positioning the fusion peptide in close proximity to the C-terminal region of the ectodomain. The formation of this structure appears to drive apposition and subsequent fusion of viral and target cell membranes. Membranes fusion leads to delivery of the nucleocapsid into the cytoplasm. This is Envelope glycoprotein gp95 (env) from Galliformes.